The primary structure comprises 294 residues: N-acetylmuramic acid 6-phosphate etherase (294 aa).

In terms of domain architecture, SIS spans 54–217; the sequence is VISSFQNGGR…STASMIGIGK (164 aa). Catalysis depends on Glu82, which acts as the Proton donor. Glu113 is a catalytic residue.

Belongs to the GCKR-like family. MurNAc-6-P etherase subfamily. As to quaternary structure, homodimer.

The catalysed reaction is N-acetyl-D-muramate 6-phosphate + H2O = N-acetyl-D-glucosamine 6-phosphate + (R)-lactate. The protein operates within amino-sugar metabolism; N-acetylmuramate degradation. In terms of biological role, specifically catalyzes the cleavage of the D-lactyl ether substituent of MurNAc 6-phosphate, producing GlcNAc 6-phosphate and D-lactate. This is N-acetylmuramic acid 6-phosphate etherase from Bacillus cytotoxicus (strain DSM 22905 / CIP 110041 / 391-98 / NVH 391-98).